The primary structure comprises 266 residues: Glucosamine-6-phosphate deaminase (266 aa).

The active-site Proton acceptor; for enolization step is the D72. Catalysis depends on D141, which acts as the For ring-opening step. H143 acts as the Proton acceptor; for ring-opening step in catalysis. The For ring-opening step role is filled by E148.

This sequence belongs to the glucosamine/galactosamine-6-phosphate isomerase family. NagB subfamily. In terms of assembly, homohexamer.

The enzyme catalyses alpha-D-glucosamine 6-phosphate + H2O = beta-D-fructose 6-phosphate + NH4(+). It participates in amino-sugar metabolism; N-acetylneuraminate degradation; D-fructose 6-phosphate from N-acetylneuraminate: step 5/5. Allosterically activated by N-acetylglucosamine 6-phosphate (GlcNAc6P). In terms of biological role, catalyzes the reversible isomerization-deamination of glucosamine 6-phosphate (GlcN6P) to form fructose 6-phosphate (Fru6P) and ammonium ion. The chain is Glucosamine-6-phosphate deaminase from Edwardsiella ictaluri (strain 93-146).